A 187-amino-acid polypeptide reads, in one-letter code: Ribosome maturation factor RimM (187 aa).

The PRC barrel domain maps to 111 to 187; sequence KDEYYWVDLI…RILVDWQADF (77 aa).

The protein belongs to the RimM family. As to quaternary structure, binds ribosomal protein uS19.

The protein resides in the cytoplasm. Functionally, an accessory protein needed during the final step in the assembly of 30S ribosomal subunit, possibly for assembly of the head region. Essential for efficient processing of 16S rRNA. May be needed both before and after RbfA during the maturation of 16S rRNA. It has affinity for free ribosomal 30S subunits but not for 70S ribosomes. This Albidiferax ferrireducens (strain ATCC BAA-621 / DSM 15236 / T118) (Rhodoferax ferrireducens) protein is Ribosome maturation factor RimM.